A 638-amino-acid polypeptide reads, in one-letter code: Growth hormone receptor (638 aa).

Residues 1–18 (MDLWQLLLTLAVAGSGNA) form the signal peptide. The Extracellular portion of the chain corresponds to 19 to 264 (VSGSEATPAI…SPFACEEDFQ (246 aa)). Disulfide bonds link Cys-56-Cys-66 and Cys-101-Cys-112. Asn-115 carries an N-linked (GlcNAc...) asparagine glycan. An intrachain disulfide couples Cys-126 to Cys-140. The region spanning 151 to 254 (PPIGLNWTLL…EVLYVALPQM (104 aa)) is the Fibronectin type-III domain. Asn-156, Asn-161, and Asn-200 each carry an N-linked (GlcNAc...) asparagine glycan. The WSXWS motif signature appears at 240–244 (YGEFS). Residues 265-288 (FPWFLIIIFGIFGLTMILFLFIFS) traverse the membrane as a helical segment. Over 289 to 638 (KQQRIKMLIL…STDQLNKIMP (350 aa)) the chain is Cytoplasmic. Residues 294–379 (KMLILPPVPV…HEKSLNILGA (86 aa)) form a required for JAK2 binding region. The short motif at 297 to 305 (ILPPVPVPK) is the Box 1 motif element. The UbE motif motif lies at 340-349 (DSWVEFIELD). Phosphoserine is present on Ser-341. Over residues 429–446 (KNQSNSPSTDTAPNTQQP) the composition is skewed to polar residues. Residues 429 to 448 (KNQSNSPSTDTAPNTQQPGV) are disordered. A phosphotyrosine mark is found at Tyr-487 and Tyr-595.

Belongs to the type I cytokine receptor family. Type 1 subfamily. On growth hormone (GH) binding, forms homodimers and binds JAK2 via a box 1-containing domain. The soluble form (GHBP) is produced by phorbol ester-promoted proteolytic cleavage at the cell surface (shedding) by ADAM17/TACE. Shedding is inhibited by growth hormone (GH) binding to the receptor probably due to a conformational change in GHR rendering the receptor inaccessible to ADAM17. In terms of processing, on GH binding, phosphorylated on tyrosine residues in the cytoplasmic domain by JAK2. Post-translationally, ubiquitinated by the ECS(SOCS2) complex following ligand-binding and phosphorylation by JAK2, leading to its degradation by the proteasome. Regulation by the ECS(SOCS2) complex acts as a negative feedback loop of growth hormone receptor signaling. Ubiquitination is not sufficient for GHR internalization.

Its subcellular location is the cell membrane. It is found in the secreted. Functionally, receptor for pituitary gland growth hormone (GH1) involved in regulating postnatal body growth. On ligand binding, couples to the JAK2/STAT5 pathway. The soluble form (GHBP) acts as a reservoir of growth hormone in plasma and may be a modulator/inhibitor of GH signaling. The chain is Growth hormone receptor (GHR) from Ailuropoda melanoleuca (Giant panda).